The primary structure comprises 1067 residues: MIKEPEFREYDPKKLEEKVEKFWSENEIYRKVKELRKDGPKYYFLDGPPYVSGAIHLGTAWNKIIKDMIIRFRTMQGYNVWRQPGYDMHGLPIEVKVEQALGLKTKKEIEEKIGVENFIKKCKEFALNNLKIMTEQFKMLGIWMDWDNPYMTIKNEYIESAWFTLKRAWEKGLLEKDKRVLHWCPRCETALAEHEVRGEYKLRKDPSIYVKFPVEGKENEYLLIWTTTPWTLPANLAVSAHPDYDYVKVKVEFNGREEYWILAKALVDKVLGEIGVKGEVVEEFKGRELEGLRYVHILMDEYPRQKEFKEKYEWAHRVILADFVTLEEGTGLVHTAPGHGEEDFEVGQKYGLPVYSPLDDQGKYTEGKWKGIYVKEADPKIIEHLREKGYLVKAGEIEHKYPHCWRCKTPLIFRATDQWFLKISKVKDKIIKENDEKVTWYPDWVKIRFDNGVRDSGDWVISRQRYWGIPLPIWQSEDGEIYVVGSWRELVELAVAIEVNGERIELPESYEEKLKVIEEKLGPEDLHRPYVDAFIIKVNGKDMRRVKDVVDVWFDSGIASWASLGYPRNKELFEKLWPADFIVEGEDQVTKWFYSQQAASIVAFDTVPYRRVAMHGYVLDEKGDKMSKSLGNIIRPEEVVERAGRDTFRFYMLWATNPWENLKFSWKGVEQVRRMLNILWNVYVLASTYMSLDNFDPRKLNPDELPFREEDKWILSRVNSLISEVENGIESFYLTKATRALYNFVVEDLSRWYVRLIRKRLWVEGEDPDKLAAYYTLWKVFDVLLRLLAPFTPYIAEEIYQNLIRPFTNVESVHMLDWPKVDEKAIDEELEREMEFIRRIVEAGSAARQRAKIKLRYPVRRIIIETEDETVKKAVERLNRILRDQLNAKEVKVGRVERELTIKPNFAKLGPEFKGDAKIIAKWINENGRELYEKGELTVEIDGKTFHLTREHIIVEEKLPDFFVSEEFEGGRVFVDKTLTRELIAEGLAREFVRRIQEMRKRLDLDVNDRIIVTIETTDENVELLKENLDYIMRETRADKIVFGKAKGYVVEWPEVQAKIGIEKVEE.

Positions 49–59 (PYVSGAIHLGT) match the 'HIGH' region motif. Residues 625-629 (KMSKS) carry the 'KMSKS' region motif. Lys628 contributes to the ATP binding site.

The protein belongs to the class-I aminoacyl-tRNA synthetase family. IleS type 2 subfamily. Monomer. Zn(2+) serves as cofactor.

The protein resides in the cytoplasm. The catalysed reaction is tRNA(Ile) + L-isoleucine + ATP = L-isoleucyl-tRNA(Ile) + AMP + diphosphate. Catalyzes the attachment of isoleucine to tRNA(Ile). As IleRS can inadvertently accommodate and process structurally similar amino acids such as valine, to avoid such errors it has two additional distinct tRNA(Ile)-dependent editing activities. One activity is designated as 'pretransfer' editing and involves the hydrolysis of activated Val-AMP. The other activity is designated 'posttransfer' editing and involves deacylation of mischarged Val-tRNA(Ile). The chain is Isoleucine--tRNA ligase from Pyrococcus abyssi (strain GE5 / Orsay).